The sequence spans 199 residues: dTTP/UTP pyrophosphatase (199 aa).

Asp76 (proton acceptor) is an active-site residue.

Belongs to the Maf family. YhdE subfamily. Requires a divalent metal cation as cofactor.

The protein resides in the cytoplasm. The catalysed reaction is dTTP + H2O = dTMP + diphosphate + H(+). It catalyses the reaction UTP + H2O = UMP + diphosphate + H(+). In terms of biological role, nucleoside triphosphate pyrophosphatase that hydrolyzes dTTP and UTP. May have a dual role in cell division arrest and in preventing the incorporation of modified nucleotides into cellular nucleic acids. The chain is dTTP/UTP pyrophosphatase from Chlorobaculum parvum (strain DSM 263 / NCIMB 8327) (Chlorobium vibrioforme subsp. thiosulfatophilum).